A 347-amino-acid polypeptide reads, in one-letter code: Druantia protein DruD (347 aa).

It is found in the cytoplasm. Its function is as follows. Component of antiviral defense system Druantia type I, composed of DruA, DruB, DruC, DruD and DruE. Expression of Druantia in E.coli (strain MG1655) confers resistance to phage lambda, SECphi18, SECphi27 and T4. The sequence is that of Druantia protein DruD from Escherichia coli (strain UMEA 4076-1).